The following is a 532-amino-acid chain: Eukaryotic translation initiation factor 3 subunit D (532 aa).

Residues A108 to W161 are disordered. A compositionally biased stretch (gly residues) spans A117–R131. A compositionally biased stretch (low complexity) spans G132 to R141. The tract at residues P296–P310 is RNA gate.

Belongs to the eIF-3 subunit D family. In terms of assembly, component of the eukaryotic translation initiation factor 3 (eIF-3) complex.

The protein localises to the cytoplasm. Functionally, mRNA cap-binding component of the eukaryotic translation initiation factor 3 (eIF-3) complex, which is involved in protein synthesis of a specialized repertoire of mRNAs and, together with other initiation factors, stimulates binding of mRNA and methionyl-tRNAi to the 40S ribosome. The eIF-3 complex specifically targets and initiates translation of a subset of mRNAs involved in cell proliferation. In the eIF-3 complex, eif3d specifically recognizes and binds the 7-methylguanosine cap of a subset of mRNAs. The sequence is that of Eukaryotic translation initiation factor 3 subunit D from Yarrowia lipolytica (strain CLIB 122 / E 150) (Yeast).